A 404-amino-acid polypeptide reads, in one-letter code: Alpha-galactosidase A (404 aa).

The N-terminal stretch at 1–23 (MRKQLLLGLGLVSALLVSVQASA) is a signal peptide. Cystine bridges form between cysteine 45-cysteine 77 and cysteine 124-cysteine 154. Aspartate 152 functions as the Nucleophile in the catalytic mechanism. Residue 185-189 (EWGDN) participates in substrate binding. Aspartate 207 serves as the catalytic Proton donor.

The protein belongs to the glycosyl hydrolase 27 family.

The catalysed reaction is Hydrolysis of terminal, non-reducing alpha-D-galactose residues in alpha-D-galactosides, including galactose oligosaccharides, galactomannans and galactolipids.. Its function is as follows. Hydrolyzes galactomannan found in plant cell wall, by cleaving alpha-1,6-D-galactose side-chains from the mannan backbone. Appears to act in synergy with mannanase (ManA) to elicit hydrolysis of galactomannan. Has greater activity against galactomannans with decreased degree of polymerisation values. To a lesser extent, is also able to degrade other galactosides containing alpha-1,6-linked D-galactose, such as melibiose and stachyose. This Cellvibrio japonicus (strain Ueda107) (Pseudomonas fluorescens subsp. cellulosa) protein is Alpha-galactosidase A (agaA).